The sequence spans 334 residues: Aspartate carbamoyltransferase catalytic subunit (334 aa).

The carbamoyl phosphate site is built by arginine 70 and threonine 71. L-aspartate is bound at residue lysine 98. Carbamoyl phosphate contacts are provided by arginine 120, histidine 150, and glutamine 153. Residues arginine 183 and arginine 239 each coordinate L-aspartate. 2 residues coordinate carbamoyl phosphate: glycine 280 and proline 281.

Belongs to the aspartate/ornithine carbamoyltransferase superfamily. ATCase family. As to quaternary structure, heterododecamer (2C3:3R2) of six catalytic PyrB chains organized as two trimers (C3), and six regulatory PyrI chains organized as three dimers (R2).

It carries out the reaction carbamoyl phosphate + L-aspartate = N-carbamoyl-L-aspartate + phosphate + H(+). The protein operates within pyrimidine metabolism; UMP biosynthesis via de novo pathway; (S)-dihydroorotate from bicarbonate: step 2/3. In terms of biological role, catalyzes the condensation of carbamoyl phosphate and aspartate to form carbamoyl aspartate and inorganic phosphate, the committed step in the de novo pyrimidine nucleotide biosynthesis pathway. The chain is Aspartate carbamoyltransferase catalytic subunit from Pseudomonas paraeruginosa (strain DSM 24068 / PA7) (Pseudomonas aeruginosa (strain PA7)).